A 333-amino-acid chain; its full sequence is tRNA N6-adenosine threonylcarbamoyltransferase (333 aa).

Positions 108 and 112 each coordinate Fe cation. Residues 129-133 (LVSGG), aspartate 161, glutamate 178, and serine 258 contribute to the substrate site. Fe cation is bound at residue aspartate 286.

It belongs to the KAE1 / TsaD family. Fe(2+) serves as cofactor.

The protein localises to the cytoplasm. It catalyses the reaction L-threonylcarbamoyladenylate + adenosine(37) in tRNA = N(6)-L-threonylcarbamoyladenosine(37) in tRNA + AMP + H(+). Functionally, required for the formation of a threonylcarbamoyl group on adenosine at position 37 (t(6)A37) in tRNAs that read codons beginning with adenine. Is probably involved in the transfer of the threonylcarbamoyl moiety of threonylcarbamoyl-AMP (TC-AMP) to the N6 group of A37. The polypeptide is tRNA N6-adenosine threonylcarbamoyltransferase (Pyrobaculum islandicum (strain DSM 4184 / JCM 9189 / GEO3)).